Here is a 519-residue protein sequence, read N- to C-terminus: Glutamate--cysteine ligase (519 aa).

It belongs to the glutamate--cysteine ligase type 1 family. Type 1 subfamily.

It carries out the reaction L-cysteine + L-glutamate + ATP = gamma-L-glutamyl-L-cysteine + ADP + phosphate + H(+). It functions in the pathway sulfur metabolism; glutathione biosynthesis; glutathione from L-cysteine and L-glutamate: step 1/2. The polypeptide is Glutamate--cysteine ligase (Yersinia pseudotuberculosis serotype I (strain IP32953)).